Here is an 82-residue protein sequence, read N- to C-terminus: Quinohemoprotein amine dehydrogenase subunit gamma (82 aa).

Positions cysteine 7–glutamate 16 form a cross-link, 4-cysteinyl-glutamic acid (Cys-Glu). Cross-links (3-cysteinyl-aspartic acid (Cys-Asp)) lie at residues cysteine 27–aspartate 33 and cysteine 41–aspartate 49. The Proton acceptor role is filled by aspartate 33. A cross-link (4'-cysteinyl-tryptophylquinone (Cys-Trp)) is located at residues cysteine 37–tryptophan 43. Tryptophylquinone is present on tryptophan 43.

This sequence belongs to the quinohemoprotein amine dehydrogenase subunit gamma family. Heterotrimer of an alpha, a beta and a gamma subunit. It depends on cysteine tryptophylquinone residue as a cofactor. Post-translationally, the cysteine tryptophylquinone (CTQ) is generated by oxidation of the indole ring of a tryptophan residue to form tryptophylquinone, followed by covalent cross-linking with a cysteine residue.

Its subcellular location is the periplasm. It carries out the reaction 2 Fe(III)-[cytochrome c550] + an aliphatic amine + H2O = 2 Fe(II)-[cytochrome c550] + an aldehyde + NH4(+) + 2 H(+). With respect to regulation, inhibited by carbonyl reagents such as hydrazine, hydroxylamine, phenylhydrazine and semicarbazide. In terms of biological role, catalyzes the oxidative deamination of a wide range of primary aliphatic and aromatic amines. The physiological electron acceptor is the constitutive cytochrome c550. In Paracoccus denitrificans, this protein is Quinohemoprotein amine dehydrogenase subunit gamma (qhnDH).